A 129-amino-acid chain; its full sequence is Small ribosomal subunit protein uS8 (129 aa).

The protein belongs to the universal ribosomal protein uS8 family. As to quaternary structure, part of the 30S ribosomal subunit.

Functionally, one of the primary rRNA binding proteins, it binds directly to 16S rRNA central domain where it helps coordinate assembly of the platform of the 30S subunit. In Nanoarchaeum equitans (strain Kin4-M), this protein is Small ribosomal subunit protein uS8.